The primary structure comprises 377 residues: Alternative oxidase, mitochondrial (377 aa).

The helical transmembrane segment at Leu149 to Leu169 threads the bilayer. Positions 156, 195, and 198 each coordinate Fe cation. A helical membrane pass occupies residues Ile214–Ser234. The Fe cation site is built by Glu246, Glu303, and His306.

The protein belongs to the alternative oxidase family. Requires Fe cation as cofactor.

The protein resides in the mitochondrion inner membrane. In terms of biological role, catalyzes cyanide-resistant oxygen consumption. May increase respiration when the cytochrome respiratory pathway is restricted, or in response to low temperatures. The protein is Alternative oxidase, mitochondrial (AOX1) of Pyricularia oryzae (strain 70-15 / ATCC MYA-4617 / FGSC 8958) (Rice blast fungus).